The primary structure comprises 285 residues: Pseudouridine-5'-phosphate glycosidase (285 aa).

The Proton donor role is filled by Glu-17. Residues Lys-77 and Val-97 each contribute to the substrate site. Residue Asp-126 participates in Mn(2+) binding. Residue 128–130 participates in substrate binding; the sequence is SQD. The active-site Nucleophile is Lys-147.

The protein belongs to the pseudouridine-5'-phosphate glycosidase family. Homotrimer. Requires Mn(2+) as cofactor.

The enzyme catalyses D-ribose 5-phosphate + uracil = psi-UMP + H2O. Functionally, catalyzes the reversible cleavage of pseudouridine 5'-phosphate (PsiMP) to ribose 5-phosphate and uracil. Functions biologically in the cleavage direction, as part of a pseudouridine degradation pathway. The protein is Pseudouridine-5'-phosphate glycosidase of Thermotoga maritima (strain ATCC 43589 / DSM 3109 / JCM 10099 / NBRC 100826 / MSB8).